The primary structure comprises 359 residues: MRVSDFSFDLPEALIARYPKAERTASRLMTLNGNSGAITDGVFTDIVAQLNSGDLLVFNNTRVIPARMFGQKASGGKIEVLVERVIDQNTALAHIRASKSPKVGNELFLGNEDSDVKVKATMVARHGALFELKFNSDESVLTILDKIGHMPLPPYIDRPDEDSDKERYQTVYNEKPGAVAAPTAGLHFDEALLERIKAKGVELAFVTLHVGAGTFQPVKVDEIADHIMHAEYVEVSDEVVAQIAKTKAAGGRVVAVGTTSVRSLESAAKAALDKNKPLSAFYGDTDIFITPGCQFQIIDALVTNFHLSESTLLMLVSAFSGYDHIMSAYQHAISQEYRFFSYGDAMFLTKQELIKQDTP.

Belongs to the QueA family. As to quaternary structure, monomer.

Its subcellular location is the cytoplasm. The catalysed reaction is 7-aminomethyl-7-carbaguanosine(34) in tRNA + S-adenosyl-L-methionine = epoxyqueuosine(34) in tRNA + adenine + L-methionine + 2 H(+). The protein operates within tRNA modification; tRNA-queuosine biosynthesis. In terms of biological role, transfers and isomerizes the ribose moiety from AdoMet to the 7-aminomethyl group of 7-deazaguanine (preQ1-tRNA) to give epoxyqueuosine (oQ-tRNA). This Colwellia psychrerythraea (strain 34H / ATCC BAA-681) (Vibrio psychroerythus) protein is S-adenosylmethionine:tRNA ribosyltransferase-isomerase.